The primary structure comprises 44 residues: Tachystatin-A1 (44 aa).

Cystine bridges form between cysteine 4–cysteine 24, cysteine 11–cysteine 29, and cysteine 23–cysteine 41.

As to expression, granular hemocytes, small secretory granules.

It localises to the secreted. In terms of biological role, exhibits stronger antimicrobial activity against the Gram-positive bacteria (S.aureus (IC(50) is 4.2 ug/ml)) and fungi (C.albicans (IC(50) is 3.0 ug/ml) and P.pastoris (IC(50) is 0.5 ug/ml)) than Gram-negative bacteria (E.coli (IC(50) is 25 ug/ml)). Binds to chitin (8.4 uM are required to obtain 50% of binding). Does not cause hemolysis on sheep erythrocytes. Has no blocking activity on the P-type calcium channel. In Tachypleus tridentatus (Japanese horseshoe crab), this protein is Tachystatin-A1.